The chain runs to 191 residues: ECF RNA polymerase sigma-E factor (191 aa).

The binds RNAP core stretch occupies residues 1–153 (MSEQLTDQVL…MAITLRELDG (153 aa)). The segment at 25–92 (LVVRYQHKVA…KNYLVAQGRR (68 aa)) is sigma-70 factor domain-2. The Polymerase core binding signature appears at 48-61 (DVVQEAFIKAYRAL). Residues 129–180 (QIVFRTIESLPEDLRMAITLRELDGLSYEEIAAIMDCPVGTVRSRIFRAREA) form a sigma-70 factor domain-4 region. The segment at residues 156-175 (YEEIAAIMDCPVGTVRSRIF) is a DNA-binding region (H-T-H motif).

It belongs to the sigma-70 factor family. ECF subfamily. As to quaternary structure, interacts transiently with the RNAP catalytic core formed by RpoA, RpoB, RpoC and RpoZ (2 alpha, 1 beta, 1 beta' and 1 omega subunit) to form the RNAP holoenzyme that can initiate transcription. Interacts 1:1 with anti-sigma-E factor RseA which prevents binding to RNAP catalytic core.

Its subcellular location is the cytoplasm. With respect to regulation, ECF sigma-E is held in an inactive form by its cognate anti-sigma factor (RseA) until released by regulated intramembrane proteolysis (RIP). RIP occurs when an extracytoplasmic signal (periplasmic stress and excess LPS) triggers a concerted proteolytic cascade to transmit information and elicit cellular responses. The anti-sigma factor RseA is an inner membrane protein, binding sigma-E in the cytoplasm and RseB in the periplasm. RseA is first cut extracytoplasmically (site-1 protease, S1P, by DegS), then within the membrane itself (site-2 protease, S2P, by RseP), while cytoplasmic proteases (predominantly ClpX-ClpP) finish degrading the regulatory protein, liberating sigma-E. Degradation of RseA requires 2 signals to activate DegS; an outer membrane protein (OMP) signal activates DegS, while an LPS signal causes release of RseB from RseA, freeing RseA to be cleaved. Its function is as follows. Sigma factors are initiation factors that promote the attachment of RNA polymerase (RNAP) to specific initiation sites and are then released. Extracytoplasmic function (ECF) sigma-E controls the envelope stress response, responding to periplasmic protein stress, increased levels of periplasmic lipopolysaccharide (LPS) as well as heat shock and oxidative stress; it controls protein processing in the extracytoplasmic compartment. The protein is ECF RNA polymerase sigma-E factor (rpoE) of Escherichia coli O157:H7.